We begin with the raw amino-acid sequence, 308 residues long: tRNA pseudouridine synthase B (308 aa).

Asp-47 acts as the Nucleophile in catalysis.

Belongs to the pseudouridine synthase TruB family. Type 1 subfamily.

It catalyses the reaction uridine(55) in tRNA = pseudouridine(55) in tRNA. Functionally, responsible for synthesis of pseudouridine from uracil-55 in the psi GC loop of transfer RNAs. The sequence is that of tRNA pseudouridine synthase B from Xanthomonas euvesicatoria pv. vesicatoria (strain 85-10) (Xanthomonas campestris pv. vesicatoria).